The sequence spans 224 residues: MQPPAFYVTGTDTGIGKTMGSTALLHALRARGHTAVGMKPVASGCERTPQGWRNEDALALQAASNPQPAYATLNPYALPAPLAPELAAADVGVTLSLEPITQAFAQLRAQAEVVVVEGVGGWAAPLSATLDQADLVRALQLPVVLVVGVRLGCINHARLTAAAIAADGLQCIGWIANEVDPQMERVEENIGMLRQRLAMPCWGRIPWRPDAEAAAQAQGLQLPR.

T18 provides a ligand contact to Mg(2+). The active site involves K39. S43 is a substrate binding site. D56 and E117 together coordinate Mg(2+). Residues D56, 117–120 (EGVG), and 177–178 (NE) each bind ATP.

It belongs to the dethiobiotin synthetase family. Homodimer. Requires Mg(2+) as cofactor.

It localises to the cytoplasm. The catalysed reaction is (7R,8S)-7,8-diammoniononanoate + CO2 + ATP = (4R,5S)-dethiobiotin + ADP + phosphate + 3 H(+). It participates in cofactor biosynthesis; biotin biosynthesis; biotin from 7,8-diaminononanoate: step 1/2. Its function is as follows. Catalyzes a mechanistically unusual reaction, the ATP-dependent insertion of CO2 between the N7 and N8 nitrogen atoms of 7,8-diaminopelargonic acid (DAPA, also called 7,8-diammoniononanoate) to form a ureido ring. This is ATP-dependent dethiobiotin synthetase BioD from Xanthomonas oryzae pv. oryzae (strain MAFF 311018).